We begin with the raw amino-acid sequence, 376 residues long: Chaperone protein DnaJ (376 aa).

The 66-residue stretch at 5 to 70 (DYYEILGVER…QKRAAYDKFG (66 aa)) folds into the J domain. The CR-type zinc-finger motif lies at 131-209 (GVSKEIKVPT…CHGDGRVQKT (79 aa)). 8 residues coordinate Zn(2+): Cys-144, Cys-147, Cys-161, Cys-164, Cys-183, Cys-186, Cys-197, and Cys-200. 4 CXXCXGXG motif repeats span residues 144 to 151 (CDECHGSG), 161 to 168 (CPTCHGSG), 183 to 190 (CPHCHGKG), and 197 to 204 (CRKCHGDG).

This sequence belongs to the DnaJ family. Homodimer. Zn(2+) serves as cofactor.

Its subcellular location is the cytoplasm. In terms of biological role, participates actively in the response to hyperosmotic and heat shock by preventing the aggregation of stress-denatured proteins and by disaggregating proteins, also in an autonomous, DnaK-independent fashion. Unfolded proteins bind initially to DnaJ; upon interaction with the DnaJ-bound protein, DnaK hydrolyzes its bound ATP, resulting in the formation of a stable complex. GrpE releases ADP from DnaK; ATP binding to DnaK triggers the release of the substrate protein, thus completing the reaction cycle. Several rounds of ATP-dependent interactions between DnaJ, DnaK and GrpE are required for fully efficient folding. Also involved, together with DnaK and GrpE, in the DNA replication of plasmids through activation of initiation proteins. The chain is Chaperone protein DnaJ from Tolumonas auensis (strain DSM 9187 / NBRC 110442 / TA 4).